The chain runs to 336 residues: Dihydroorotate dehydrogenase (quinone) (336 aa).

FMN-binding positions include 62–66 and Thr-86; that span reads AGMDK. Lys-66 lines the substrate pocket. Substrate is bound at residue 111 to 115; it reads NRMGF. Asn-139 and Asn-172 together coordinate FMN. Asn-172 contributes to the substrate binding site. Ser-175 acts as the Nucleophile in catalysis. Asn-177 contributes to the substrate binding site. Lys-217 and Thr-245 together coordinate FMN. 246–247 is a binding site for substrate; the sequence is NT. Residues Gly-268, Gly-297, and 318-319 each bind FMN; that span reads YS.

It belongs to the dihydroorotate dehydrogenase family. Type 2 subfamily. As to quaternary structure, monomer. FMN is required as a cofactor.

The protein resides in the cell membrane. The enzyme catalyses (S)-dihydroorotate + a quinone = orotate + a quinol. The protein operates within pyrimidine metabolism; UMP biosynthesis via de novo pathway; orotate from (S)-dihydroorotate (quinone route): step 1/1. In terms of biological role, catalyzes the conversion of dihydroorotate to orotate with quinone as electron acceptor. The polypeptide is Dihydroorotate dehydrogenase (quinone) (Buchnera aphidicola subsp. Schizaphis graminum (strain Sg)).